The sequence spans 360 residues: Lipid-A-disaccharide synthase (360 aa).

This sequence belongs to the LpxB family.

The catalysed reaction is a lipid X + a UDP-2-N,3-O-bis[(3R)-3-hydroxyacyl]-alpha-D-glucosamine = a lipid A disaccharide + UDP + H(+). It participates in bacterial outer membrane biogenesis; LPS lipid A biosynthesis. Condensation of UDP-2,3-diacylglucosamine and 2,3-diacylglucosamine-1-phosphate to form lipid A disaccharide, a precursor of lipid A, a phosphorylated glycolipid that anchors the lipopolysaccharide to the outer membrane of the cell. This chain is Lipid-A-disaccharide synthase, found in Helicobacter pylori (strain HPAG1).